The sequence spans 233 residues: EDDIEADHVGVYGTTVYQSPGDIGQFTHEFDGDEWFYVDLDKKETVWMLPEFGQLTSFDPQGGLQNIAVVKHNLEILTKRSNFTPAANEAPQATVFPKSPVLLGQPNTLICFVDNIFPPVINITWLRNSKSVTDGVYETSFLVNRDHSFHKLSYLTFIPSDDDIYDCKVEHWGLEEPVLKHWEPEIPAPMSELTETVVCALGLSVGLVGIVVGTIFIIQGLRSGGTSRHPGPL.

Residues 1 to 88 are alpha-1; the sequence is EDDIEADHVG…KRSNFTPAAN (88 aa). Residues 1 to 195 lie on the Extracellular side of the membrane; that stretch reads EDDIEADHVG…IPAPMSELTE (195 aa). An alpha-2 region spans residues 89–182; the sequence is EAPQATVFPK…GLEEPVLKHW (94 aa). The Ig-like C1-type domain occupies 91–183; sequence PQATVFPKSP…LEEPVLKHWE (93 aa). A disulfide bond links Cys111 and Cys167. Asn122 is a glycosylation site (N-linked (GlcNAc...) asparagine). The tract at residues 183–195 is connecting peptide; that stretch reads EPEIPAPMSELTE. Residues 196-221 form a helical membrane-spanning segment; sequence TVVCALGLSVGLVGIVVGTIFIIQGL. The Cytoplasmic portion of the chain corresponds to 222–233; that stretch reads RSGGTSRHPGPL.

Belongs to the MHC class II family.

The protein resides in the membrane. This chain is H-2 class II histocompatibility antigen, A-R alpha chain (H2-Aa), found in Mus musculus (Mouse).